Here is a 579-residue protein sequence, read N- to C-terminus: Vitamin B6 transporter TPN1 (579 aa).

The next 12 membrane-spanning stretches (helical) occupy residues 99-119, 123-143, 158-178, 199-219, 222-242, 275-295, 303-323, 363-383, 395-415, 422-442, 520-540, and 546-566; these read TGGL…GLSF, LASS…CSIM, LFGW…VMGW, PLWV…IFGI, VIKV…LLYI, LCYS…ILFP, IFCL…ILGL, VVVL…SAAF, IPRW…ALIG, ILGN…ILLF, FAFI…YWIG, and FGEY…GVVY.

It belongs to the purine-cytosine permease (2.A.39) family.

It localises to the membrane. Thiamine-regulated, high affinity import carrier of pyridoxine, pyridoxal and pyridoxamine. In Saccharomyces cerevisiae (Baker's yeast), this protein is Vitamin B6 transporter TPN1 (TPN1).